Reading from the N-terminus, the 144-residue chain is IgW chain C region, secreted form 1/3 (144 aa).

The Ig-like domain maps to Val1–Ser82. Asn3, Asn43, and Asn123 each carry an N-linked (GlcNAc...) asparagine glycan. Residues Cys11 and Cys68 are joined by a disulfide bond. The secretory tail stretch occupies residues Lys87–Lys144.

Expressed mainly in lymphoid tissues including spleen, epigonal organ and circulating lymphocytes.

The protein resides in the secreted. The chain is IgW chain C region, secreted form 1/3 from Heterodontus francisci (Horn shark).